Here is a 750-residue protein sequence, read N- to C-terminus: Photosystem I P700 chlorophyll a apoprotein A1 (750 aa).

Helical transmembrane passes span 70–93 (VFSA…FHGA), 156–179 (LYST…FHYH), 195–219 (LNHH…HVSL), 291–309 (TAHH…GHMY), 346–369 (WHAQ…HHMY), 385–411 (LSLF…IFMV), 433–455 (AIIS…LYIH), and 531–549 (FLVH…LILL). 2 residues coordinate [4Fe-4S] cluster: cysteine 573 and cysteine 582. Transmembrane regions (helical) follow at residues 589–610 (HVFL…HFSW) and 664–686 (LSAY…MFLF). Histidine 675 contributes to the chlorophyll a' binding site. Methionine 683 and tyrosine 691 together coordinate chlorophyll a. Phylloquinone is bound at residue tryptophan 692. The chain crosses the membrane as a helical span at residues 724–744 (AVGVAHYLLGGIATTWAFFLA).

The protein belongs to the PsaA/PsaB family. In terms of assembly, the PsaA/B heterodimer binds the P700 chlorophyll special pair and subsequent electron acceptors. PSI consists of a core antenna complex that captures photons, and an electron transfer chain that converts photonic excitation into a charge separation. The eukaryotic PSI reaction center is composed of at least 11 subunits. The cofactor is P700 is a chlorophyll a/chlorophyll a' dimer, A0 is one or more chlorophyll a, A1 is one or both phylloquinones and FX is a shared 4Fe-4S iron-sulfur center..

The protein localises to the plastid. Its subcellular location is the chloroplast thylakoid membrane. The catalysed reaction is reduced [plastocyanin] + hnu + oxidized [2Fe-2S]-[ferredoxin] = oxidized [plastocyanin] + reduced [2Fe-2S]-[ferredoxin]. PsaA and PsaB bind P700, the primary electron donor of photosystem I (PSI), as well as the electron acceptors A0, A1 and FX. PSI is a plastocyanin-ferredoxin oxidoreductase, converting photonic excitation into a charge separation, which transfers an electron from the donor P700 chlorophyll pair to the spectroscopically characterized acceptors A0, A1, FX, FA and FB in turn. Oxidized P700 is reduced on the lumenal side of the thylakoid membrane by plastocyanin. In Anthoceros angustus (Hornwort), this protein is Photosystem I P700 chlorophyll a apoprotein A1.